The sequence spans 233 residues: Small ribosomal subunit protein uS3 (233 aa).

Residues 39–107 (VRQFLASELT…PSQINIAEVR (69 aa)) enclose the KH type-2 domain.

The protein belongs to the universal ribosomal protein uS3 family. Part of the 30S ribosomal subunit. Forms a tight complex with proteins S10 and S14.

Binds the lower part of the 30S subunit head. Binds mRNA in the 70S ribosome, positioning it for translation. The chain is Small ribosomal subunit protein uS3 from Baumannia cicadellinicola subsp. Homalodisca coagulata.